The chain runs to 1487 residues: Major viral transcription factor (1487 aa).

Disordered stretches follow at residues 41–295 (AAPD…LPPG), 310–370 (LAKT…AEEA), and 803–1007 (PPTR…HTPR). Positions 66–75 (VIPPPSPTPE) are enriched in pro residues. Low complexity-rich tracts occupy residues 165–193 (PSSASPGGGSPAPRVRSISISSSSSSSSS) and 201–213 (DGAGASSSSSSSS). The segment covering 214–224 (DDSDSDEGGEE) has biased composition (acidic residues). Positions 235–272 (AAKTPSAAGSPGPSSGGDRPAAGAATPKSCRSGAASPG) are enriched in low complexity. Positions 273-285 (APAPAPASAPAPS) are enriched in pro residues. 3 stretches are compositionally biased toward low complexity: residues 807–829 (SQQPSSSSPGGEPFSGSAAAEGS), 849–860 (PSSHSQSPQHSQ), and 867–877 (ATTATCCRATQ). Positions 878-893 (TNARSRGQQHQPQKAR) are enriched in polar residues. The segment covering 920 to 929 (HGRPRGKSGK) has biased composition (basic residues). Positions 938–951 (AAQAGASASFSSSA) are enriched in low complexity. Over residues 988–1007 (GPDRRGGFRRVPRGDCHTPR) the composition is skewed to basic and acidic residues.

The protein belongs to the herpesviridae ICP4 family. A long stretch of serine residues may be a major site of phosphorylation.

It is found in the host nucleus. Its function is as follows. This IE protein is a multifunctional protein capable of migrating to the nucleus, binding to DNA, trans-activating other viral genes, and autoregulating its own synthesis. The sequence is that of Major viral transcription factor (IE) from Equine herpesvirus 1 (strain Ab4p) (EHV-1).